We begin with the raw amino-acid sequence, 368 residues long: Putative alcohol dehydrogenase D (368 aa).

The Zn(2+) site is built by cysteine 40, histidine 61, cysteine 91, cysteine 94, cysteine 97, cysteine 105, and cysteine 167.

Belongs to the zinc-containing alcohol dehydrogenase family. The cofactor is Zn(2+).

The enzyme catalyses a primary alcohol + NAD(+) = an aldehyde + NADH + H(+). It catalyses the reaction a secondary alcohol + NAD(+) = a ketone + NADH + H(+). Its function is as follows. Required for maintaining the appropriate mycolic acid composition and permeability of the envelope on its exposure to acidic pH. The polypeptide is Putative alcohol dehydrogenase D (adhD) (Mycobacterium tuberculosis (strain CDC 1551 / Oshkosh)).